A 496-amino-acid chain; its full sequence is uncharacterized protein (496 aa).

Helical transmembrane passes span 33–53 (FLKG…LIFA), 89–109 (LNFL…YTLI), 127–147 (PWFV…FTFF), 154–174 (VFNL…YEIF), 193–213 (LIIA…TPLV), 247–267 (IILI…NTNF), 285–305 (LWFI…VFAY), 320–340 (LWVY…YMVF), 355–375 (LLNL…VTLF), 382–402 (SLIN…IYIF), 411–431 (LLVL…IVGF), and 455–475 (VQIM…YLTI).

It localises to the cell membrane. This is an uncharacterized protein from Ureaplasma parvum serovar 3 (strain ATCC 700970).